The sequence spans 1067 residues: Kinesin-like protein KIF11-B (1067 aa).

Residues 18 to 359 enclose the Kinesin motor domain; the sequence is NIQVVVRCRP…LDYANRAKSI (342 aa). Residue 105-112 participates in ATP binding; sequence GQTGTGKT. Positions 365-480 form a coiled coil; sequence VNQKLTKKAL…SKEQLAQESF (116 aa). Thr-937 is modified (phosphothreonine; by CDK1). Ser-1046 is modified (phosphoserine; by NEK6).

It belongs to the TRAFAC class myosin-kinesin ATPase superfamily. Kinesin family. BimC subfamily. Heterotetramer of two heavy and two light chains. Interacts with aurka. In terms of processing, phosphorylation of Thr-937 during mitosis controls the association of this protein with the spindle apparatus. A subset of this protein primarily localized at the spindle pole is phosphorylated by NEK6 during mitosis. Post-translationally, phosphorylated on a serine residue by aurka. As to expression, in unfertilized eggs, shows highest expression in the germinal vesicle and radial yolk-poor channels. Also present in testis.

It localises to the cytoplasm. The protein resides in the cytoskeleton. Its subcellular location is the spindle pole. Functionally, plus end-directed motor protein required for establishing a bipolar spindle. Associates with both interphase and spindle microtubules. May be involved in nuclear divisions taking place during the development of unfertilized eggs. Required in non-mitotic cells for transport of secretory proteins from the Golgi complex to the cell surface. This is Kinesin-like protein KIF11-B (kif11-b) from Xenopus laevis (African clawed frog).